Consider the following 363-residue polypeptide: Spermidine/putrescine import ATP-binding protein PotA (363 aa).

The ABC transporter domain occupies 9-239; sequence IDVRNAVKRY…PANRFVADFI (231 aa). 41–48 provides a ligand contact to ATP; sequence GPSGCGKT.

It belongs to the ABC transporter superfamily. Spermidine/putrescine importer (TC 3.A.1.11.1) family. The complex is composed of two ATP-binding proteins (PotA), two transmembrane proteins (PotB and PotC) and a solute-binding protein (PotD).

It is found in the cell inner membrane. The enzyme catalyses ATP + H2O + polyamine-[polyamine-binding protein]Side 1 = ADP + phosphate + polyamineSide 2 + [polyamine-binding protein]Side 1.. In terms of biological role, part of the ABC transporter complex PotABCD involved in spermidine/putrescine import. Responsible for energy coupling to the transport system. This Roseobacter denitrificans (strain ATCC 33942 / OCh 114) (Erythrobacter sp. (strain OCh 114)) protein is Spermidine/putrescine import ATP-binding protein PotA.